The sequence spans 512 residues: Rab11 family-interacting protein 2 (512 aa).

The region spanning 1-120 (MMLSEQAQKW…DKQRRKTEWF (120 aa)) is the C2 domain. Residues 15–102 (VQVTVLQAKD…GLDKFLGQVA (88 aa)) are necessary for its cellular translocation to the plasma membrane. 2 disordered regions span residues 174-231 (RKSD…MSDL) and 263-287 (PESGSLKSPHRRTLSFDTSKLNQPG). Polar residues-rich tracts occupy residues 221 to 231 (RLSSAHSMSDL) and 277 to 287 (SFDTSKLNQPG). Ser227 is subject to Phosphoserine; by MARK2. Ser277 carries the phosphoserine modification. An NPF 1 motif is present at residues 323–325 (NPF). The segment covering 347-374 (KESKREKREKVSLFERVTGKRDSRRPDK) has biased composition (basic and acidic residues). Residues 347 to 390 (KESKREKREKVSLFERVTGKRDSRRPDKLNNGGSDSPCDLKSPS) are disordered. Short sequence motifs (NPF) lie at residues 406 to 408 (NPF) and 440 to 442 (NPF). The 63-residue stretch at 437 to 499 (PDNNPFDATA…EETPSILRVP (63 aa)) folds into the FIP-RBD domain. A necessary for interaction with AP2A1, RAB11A, subcellular location, endocytosis activity and homooligomerization region spans residues 465–512 (ELLRRKDTHIRELEDYIDNLLVRVMEETPSILRVPYEPSRKAGKFTNS).

As to quaternary structure, homooligomerizes in a Rab11-independent manner. Forms a heterooligomeric complex with RAB11FIP4. Interacts with AP2A1, MYO5B, RAB25 and REPS1. Interacts with RAB11A and RAB11B (activated GTP-bound form). Interacts with NPC1L1. Interacts (via NPF motifs) with EHD1 and EHD3. Interacts with TICAM2; this interaction directs RAB11FIP2 to the phagosome. Interacts with RAB14 and RAB25 (GTP-bound forms). Post-translationally, phosphorylation at Ser-227 by MARK2 regulates epithelial cell polarity.

It localises to the cell membrane. The protein resides in the recycling endosome membrane. A Rab11 effector binding preferentially phosphatidylinositol 3,4,5-trisphosphate (PtdInsP3) and phosphatidic acid (PA) and acting in the regulation of the transport of vesicles from the endosomal recycling compartment (ERC) to the plasma membrane. Involved in insulin granule exocytosis. Also involved in receptor-mediated endocytosis and membrane trafficking of recycling endosomes, probably originating from clathrin-coated vesicles. Required in a complex with MYO5B and RAB11 for the transport of NPC1L1 to the plasma membrane. Also acts as a regulator of cell polarity. Plays an essential role in phagocytosis through a mechanism involving TICAM2, RAC1 and CDC42 Rho GTPases for controlling actin-dynamics. This chain is Rab11 family-interacting protein 2 (Rab11fip2), found in Mus musculus (Mouse).